Here is a 664-residue protein sequence, read N- to C-terminus: Protein-arginine deiminase type-3 (664 aa).

This sequence belongs to the protein arginine deiminase family. Requires Ca(2+) as cofactor. As to expression, hair follicles, and epidermis at very low levels.

It is found in the cytoplasm. The enzyme catalyses L-arginyl-[protein] + H2O = L-citrullyl-[protein] + NH4(+). In terms of biological role, catalyzes the deimination of arginine residues of proteins. In Homo sapiens (Human), this protein is Protein-arginine deiminase type-3 (PADI3).